Here is a 247-residue protein sequence, read N- to C-terminus: tRNA (guanine-N(7)-)-methyltransferase (247 aa).

S-adenosyl-L-methionine contacts are provided by residues glycine 70, glutamate 93–isoleucine 94, asparagine 128–alanine 129, and leucine 148. Aspartate 151 is a catalytic residue. Residue serine 226–glutamate 228 participates in S-adenosyl-L-methionine binding.

This sequence belongs to the class I-like SAM-binding methyltransferase superfamily. TrmB family.

It localises to the nucleus. The catalysed reaction is guanosine(46) in tRNA + S-adenosyl-L-methionine = N(7)-methylguanosine(46) in tRNA + S-adenosyl-L-homocysteine. Its pathway is tRNA modification; N(7)-methylguanine-tRNA biosynthesis. Catalyzes the formation of N(7)-methylguanine at position 46 (m7G46) in tRNA. This is tRNA (guanine-N(7)-)-methyltransferase from Drosophila virilis (Fruit fly).